We begin with the raw amino-acid sequence, 422 residues long: Serine protease inhibitor A3A (422 aa).

The signal sequence occupies residues 1–17 (MAFIAALGLLMVGICPA). N-linked (GlcNAc...) asparagine glycosylation is found at Asn-218, Asn-230, and Asn-271. Residues 369 to 394 (HTEADVITIARYNFQSAKIKAKIVKV) are RCL.

It belongs to the serpin family.

The protein resides in the secreted. In Mus musculus (Mouse), this protein is Serine protease inhibitor A3A (Serpina3a).